A 1174-amino-acid polypeptide reads, in one-letter code: Male determiner protein Mdmd(Y) (1174 aa).

Over residues Met1–Pro15 the composition is skewed to basic and acidic residues. Disordered regions lie at residues Met1–Arg51, Arg79–Glu109, and Lys136–Ser259. The segment covering Ser16–Ser35 has biased composition (low complexity). Residues Lys36–Leu47 show a composition bias toward polar residues. Basic and acidic residues predominate over residues Arg79–Ser92. Residues Leu138–Ser153 are compositionally biased toward low complexity. Residues Ser167–Ser180 are compositionally biased toward basic residues. Residues His183–Asn200 show a composition bias toward basic and acidic residues. Residues Arg201–Glu223 are compositionally biased toward basic residues. A compositionally biased stretch (basic and acidic residues) spans Arg235–Ser259. The 184-residue stretch at Lys348–Gly531 folds into the MIF4G domain. A compositionally biased stretch (low complexity) spans Asp597–Ser608. Positions Asp597 to Asp616 are disordered. The 117-residue stretch at Ala641–Leu757 folds into the MI domain. Positions Ser840–Pro857 are enriched in low complexity. Disordered regions lie at residues Ser840–Lys1045 and Lys1089–Tyr1135. Basic residues-rich tracts occupy residues Lys869–Ser886 and Ile895–Lys909. The span at Arg910–Leu924 shows a compositional bias: basic and acidic residues. A compositionally biased stretch (low complexity) spans Ser926–Asp957. Residues Lys963–Lys1001 are compositionally biased toward basic residues. Over residues Ser1010 to Ser1020 the composition is skewed to low complexity. Residues Arg1034–Lys1045 are compositionally biased toward basic residues. The segment covering Lys1089–Arg1118 has biased composition (basic and acidic residues). Positions Arg1119 to Asn1130 are enriched in basic residues.

Belongs to the CWC22 family. As to quaternary structure, component of the spliceosome C complex.

It localises to the nucleus speckle. Its function is as follows. Male determiner protein (M-factor) that controls male somatic sexual differentiation. Acts as a dominant factor that regulates the mRNA splicing of transformer (tra) and doublesex (dsx) transcripts and promotes expression of male splice forms of tra and dsx. Probably acts as a component of the spliceosome C complex required for mRNA splicing factor and exon-junction complex (EJC) assembly. Hinders eIF4AIII from non-specifically binding RNA and escorts it to the splicing machinery to promote EJC assembly on mature mRNAs. In Musca domestica (House fly), this protein is Male determiner protein Mdmd(Y).